Reading from the N-terminus, the 476-residue chain is UDP-N-acetylmuramate--L-alanine ligase (476 aa).

121 to 127 (GAHGKTT) lines the ATP pocket.

The protein belongs to the MurCDEF family.

The protein resides in the cytoplasm. It catalyses the reaction UDP-N-acetyl-alpha-D-muramate + L-alanine + ATP = UDP-N-acetyl-alpha-D-muramoyl-L-alanine + ADP + phosphate + H(+). It functions in the pathway cell wall biogenesis; peptidoglycan biosynthesis. Its function is as follows. Cell wall formation. This Clavibacter michiganensis subsp. michiganensis (strain NCPPB 382) protein is UDP-N-acetylmuramate--L-alanine ligase.